Reading from the N-terminus, the 888-residue chain is MDMATSNINGHGDRPSPAARFPTAPSVMTMNGNFASVGDAPTKEQYEHGIQVIDEQKEFNPNLNEYLQYTDTAHSGFNYHLISVFGSQSTGKSTLLNHLFGTQFGVMSERERRQTTKGIWMSKNKNQSSGASESETMADNILVMDVEGTDGRERGEDQDFERKSALFALATSEVLIVNIWEHQVGLYQGANMGLLKTVFEVNCQLFLKDKQSTPRSLLFFVIRDHLGTTPLANLKETLIQDLSAIWTSLSKPAGLENSKIEDYFDFAFAALPHKILQPDKFITEVQKLGTRFRAGRKSARAEDAGFEGGVFLPEYHRRIPADGFAVYTEGVWDQIVNNKDLDLPTQQELLAQFRCDEISREVLISFDAKIHPLEEKQGEDVRSGKPTVIADLGVTGKTARTSTIKHFETQASRYHKAVYTLKRTELEGKIDTRLKLLFHGQLLAAHKSGVASFSDAVSTAVKNGQKRAASYEFADIVEREKEVALKTFEAEMKSLYIEELSWTNFSSSYDLFEKDLNEVSGNLRKEEMRRLATHVERWVRSRLNDSIGVEFNKLGSGRGGSGAPETGEKPATEKDLWDRIWKTFTGTVKEAESKFIERAKSFDASEDEIEIGLWRLRRKSWGVLRAKIDEEVMEGNILLKLRENFEDKFRYDEAGVPRIWRPSDDIEGIYTKARESTLTLIPLLAKFKLLETSSPPELPEWIGNTPASVDPKDEEDLTPIGGVDEEEGKSLEEEMTVLSEAKRQDLVVRFKKTADGVYVEAKRSAIGGVAQVPLYFYGLLLALGWNEIVAVLRNPIYFVFLILCGVAGYVTYTLNLWGPIIRMLNAASTQGVEIGKEKLREFLKDSEVGRQALGMQGRDAGDSDAISLNTLDSRGKRVVREDEDVDEI.

Residues 1–24 form a disordered region; it reads MDMATSNINGHGDRPSPAARFPTA. Over 1 to 771 the chain is Cytoplasmic; it reads MDMATSNING…KRSAIGGVAQ (771 aa). The region spanning 76–315 is the GB1/RHD3-type G domain; sequence GFNYHLISVF…FEGGVFLPEY (240 aa). 86–93 is a GTP binding site; the sequence is GSQSTGKS. Residues 703 to 723 are disordered; sequence GNTPASVDPKDEEDLTPIGGV. The segment covering 712 to 723 has biased composition (acidic residues); that stretch reads KDEEDLTPIGGV. Positions 724–745 form a coiled coil; sequence DEEEGKSLEEEMTVLSEAKRQD. A helical membrane pass occupies residues 772 to 792; that stretch reads VPLYFYGLLLALGWNEIVAVL. Over 793 to 795 the chain is Lumenal; the sequence is RNP. The chain crosses the membrane as a helical span at residues 796 to 816; the sequence is IYFVFLILCGVAGYVTYTLNL. At 817-888 the chain is on the cytoplasmic side; sequence WGPIIRMLNA…VREDEDVDEI (72 aa).

This sequence belongs to the TRAFAC class dynamin-like GTPase superfamily. GB1/RHD3 GTPase family. RHD3 subfamily.

Its subcellular location is the endoplasmic reticulum membrane. Its function is as follows. Cooperates with the reticulon proteins and tubule-shaping DP1 family proteins to generate and maintain the structure of the tubular endoplasmic reticulum network. Has GTPase activity, which is required for its function in ER organization. In Sclerotinia sclerotiorum (strain ATCC 18683 / 1980 / Ss-1) (White mold), this protein is Protein sey1 (sey1).